The primary structure comprises 172 residues: Oleosin 18 kDa (172 aa).

Residue Ala2 is modified to N-acetylalanine. A polar region spans residues 2–38 (ADRDRAGQYYQQQRGQVGETVKGILPEKAPSASQALT). Residues 39-110 (VATLFPLGGL…GGLSSLTFLA (72 aa)) are hydrophobic. The next 3 membrane-spanning stretches (helical) occupy residues 42–62 (LFPLGGLLLVLSGLALAASVV), 70–90 (VFLIFSPVLVPAALLIGLAVA), and 91–111 (GFLTSGALGLGGLSSLTFLAN). The segment at 147–172 (HAIQGRADQAGTGAGAGGGAGTKTSS) is disordered. The segment covering 158–172 (TGAGAGGGAGTKTSS) has biased composition (gly residues).

It belongs to the oleosin family.

Its subcellular location is the lipid droplet. It is found in the membrane. Its function is as follows. May have a structural role to stabilize the lipid body during desiccation of the seed by preventing coalescence of the oil. Probably interacts with both lipid and phospholipid moieties of lipid bodies. May also provide recognition signals for specific lipase anchorage in lipolysis during seedling growth. This chain is Oleosin 18 kDa (OLE18), found in Oryza sativa subsp. indica (Rice).